We begin with the raw amino-acid sequence, 218 residues long: MSGEASTPAQDPSVEPLDAAPVAAEPEVMSTETPAEGSLTDPAERLQQLEHELQTLKQEHETLQSQYMRIAADFDNFRKRQSRDQEDIRQQLVCSTLSEILPVVDNFERARQQLNPESEEAQALHRSYQGLYKQLVDVLKQQGVARMEVVGQLFDPTLHEAVLREESTEQPEDVVIEELQRGYHLNGKVLRHALVKVSMGPGPSADAEGAASAEAEDS.

Positions 1–10 (MSGEASTPAQ) are enriched in polar residues. 2 disordered regions span residues 1-44 (MSGE…DPAE) and 198-218 (SMGP…AEDS). Over residues 200–218 (GPGPSADAEGAASAEAEDS) the composition is skewed to low complexity.

Belongs to the GrpE family. As to quaternary structure, homodimer.

It is found in the cytoplasm. Its function is as follows. Participates actively in the response to hyperosmotic and heat shock by preventing the aggregation of stress-denatured proteins, in association with DnaK and GrpE. It is the nucleotide exchange factor for DnaK and may function as a thermosensor. Unfolded proteins bind initially to DnaJ; upon interaction with the DnaJ-bound protein, DnaK hydrolyzes its bound ATP, resulting in the formation of a stable complex. GrpE releases ADP from DnaK; ATP binding to DnaK triggers the release of the substrate protein, thus completing the reaction cycle. Several rounds of ATP-dependent interactions between DnaJ, DnaK and GrpE are required for fully efficient folding. The protein is Protein GrpE of Parasynechococcus marenigrum (strain WH8102).